The sequence spans 154 residues: Transcription antitermination protein NusB (154 aa).

Positions 132 to 154 are disordered; that stretch reads KDKQSPQSTPLDDSDKDESDQTN. Residues 143-154 show a composition bias toward acidic residues; sequence DDSDKDESDQTN.

This sequence belongs to the NusB family.

Its function is as follows. Involved in transcription antitermination. Required for transcription of ribosomal RNA (rRNA) genes. Binds specifically to the boxA antiterminator sequence of the ribosomal RNA (rrn) operons. The chain is Transcription antitermination protein NusB from Bifidobacterium animalis subsp. lactis (strain AD011).